We begin with the raw amino-acid sequence, 218 residues long: Adenylate kinase (218 aa).

10–15 (GAGKGT) provides a ligand contact to ATP. The tract at residues 30–59 (STGDMLRAAVKAGTPLGIAAKKIMDEGGLV) is NMP. Residues T31, R36, 57–59 (GLV), 85–88 (GFPR), and Q92 contribute to the AMP site. The tract at residues 122–159 (GRRVHPASGRTYHVKFNPPKVAGKDDLTGEELIQRDDD) is LID. Residues R123 and 132-133 (TY) each bind ATP. AMP contacts are provided by R156 and R167. G203 provides a ligand contact to ATP.

It belongs to the adenylate kinase family. In terms of assembly, monomer.

The protein localises to the cytoplasm. The catalysed reaction is AMP + ATP = 2 ADP. Its pathway is purine metabolism; AMP biosynthesis via salvage pathway; AMP from ADP: step 1/1. Functionally, catalyzes the reversible transfer of the terminal phosphate group between ATP and AMP. Plays an important role in cellular energy homeostasis and in adenine nucleotide metabolism. This is Adenylate kinase from Janthinobacterium sp. (strain Marseille) (Minibacterium massiliensis).